A 385-amino-acid polypeptide reads, in one-letter code: 1-deoxy-D-xylulose 5-phosphate reductoisomerase (385 aa).

Residues Thr13, Gly14, Ser15, Ile16, Asn40, and Asn122 each coordinate NADPH. Residue Lys123 coordinates 1-deoxy-D-xylulose 5-phosphate. Glu124 is a binding site for NADPH. Asp148 contacts Mn(2+). 1-deoxy-D-xylulose 5-phosphate-binding residues include Ser149, Glu150, Ser177, and His200. Residue Glu150 coordinates Mn(2+). Residue Gly206 participates in NADPH binding. 1-deoxy-D-xylulose 5-phosphate is bound by residues Ser213, Asn218, Lys219, and Glu222. Glu222 provides a ligand contact to Mn(2+).

It belongs to the DXR family. It depends on Mg(2+) as a cofactor. Requires Mn(2+) as cofactor.

The catalysed reaction is 2-C-methyl-D-erythritol 4-phosphate + NADP(+) = 1-deoxy-D-xylulose 5-phosphate + NADPH + H(+). It participates in isoprenoid biosynthesis; isopentenyl diphosphate biosynthesis via DXP pathway; isopentenyl diphosphate from 1-deoxy-D-xylulose 5-phosphate: step 1/6. Functionally, catalyzes the NADPH-dependent rearrangement and reduction of 1-deoxy-D-xylulose-5-phosphate (DXP) to 2-C-methyl-D-erythritol 4-phosphate (MEP). This is 1-deoxy-D-xylulose 5-phosphate reductoisomerase from Francisella tularensis subsp. novicida (strain U112).